We begin with the raw amino-acid sequence, 431 residues long: Serine hydroxymethyltransferase (431 aa).

(6S)-5,6,7,8-tetrahydrofolate is bound by residues L127 and 131–133 (GHL). At K236 the chain carries N6-(pyridoxal phosphate)lysine.

This sequence belongs to the SHMT family. Homodimer. Pyridoxal 5'-phosphate serves as cofactor.

It localises to the cytoplasm. The catalysed reaction is (6R)-5,10-methylene-5,6,7,8-tetrahydrofolate + glycine + H2O = (6S)-5,6,7,8-tetrahydrofolate + L-serine. The protein operates within one-carbon metabolism; tetrahydrofolate interconversion. It functions in the pathway amino-acid biosynthesis; glycine biosynthesis; glycine from L-serine: step 1/1. Its function is as follows. Catalyzes the reversible interconversion of serine and glycine with tetrahydrofolate (THF) serving as the one-carbon carrier. This reaction serves as the major source of one-carbon groups required for the biosynthesis of purines, thymidylate, methionine, and other important biomolecules. Also exhibits THF-independent aldolase activity toward beta-hydroxyamino acids, producing glycine and aldehydes, via a retro-aldol mechanism. This is Serine hydroxymethyltransferase from Granulibacter bethesdensis (strain ATCC BAA-1260 / CGDNIH1).